The following is a 35-amino-acid chain: Photosystem II reaction center protein T (35 aa).

Residues 3 to 23 (ALVYTFLLVSTLGIIFFAIFF) form a helical membrane-spanning segment.

This sequence belongs to the PsbT family. PSII is composed of 1 copy each of membrane proteins PsbA, PsbB, PsbC, PsbD, PsbE, PsbF, PsbH, PsbI, PsbJ, PsbK, PsbL, PsbM, PsbT, PsbY, PsbZ, Psb30/Ycf12, at least 3 peripheral proteins of the oxygen-evolving complex and a large number of cofactors. It forms dimeric complexes.

The protein resides in the plastid. Its subcellular location is the chloroplast thylakoid membrane. Functionally, found at the monomer-monomer interface of the photosystem II (PS II) dimer, plays a role in assembly and dimerization of PSII. PSII is a light-driven water plastoquinone oxidoreductase, using light energy to abstract electrons from H(2)O, generating a proton gradient subsequently used for ATP formation. The protein is Photosystem II reaction center protein T of Cedrus deodara (Deodar cedar).